The primary structure comprises 181 residues: SRP-independent targeting protein 2 (181 aa).

Over 1–15 (MAGKAGRKQASSNAK) the chain is Cytoplasmic. The chain crosses the membrane as a helical span at residues 16-36 (IIQGLYKQVSLFLGMAIVRLF). The Lumenal segment spans residues 37–45 (ISRKVTIGQ). A helical transmembrane segment spans residues 46-66 (WIKLVALNVPMFVALYIIVLS). Residues 67 to 89 (GKPKYDGNRVVKQGIDLNDNTNL) are Cytoplasmic-facing. A helical membrane pass occupies residues 90 to 110 (ISYFFDLIYLSLFGNIGIIAF). At 111 to 112 (RT) the chain is on the lumenal side. A helical membrane pass occupies residues 113 to 133 (FKFWWCLLLCPIYAGYKLYGL). The Cytoplasmic segment spans residues 134–181 (KNMFMPGAQQTQADNRSKNANEGQSKSKRQMKRERRGETDSKIKYKYR). Over residues 144-157 (TQADNRSKNANEGQ) the composition is skewed to polar residues. The tract at residues 144–181 (TQADNRSKNANEGQSKSKRQMKRERRGETDSKIKYKYR) is disordered. Over residues 168-181 (RRGETDSKIKYKYR) the composition is skewed to basic and acidic residues.

It belongs to the TMEM208 family. As to quaternary structure, interacts with SND1, PHO88/SND3 and the translocon complex subunit SEC61. ENV10/SND2 and PHO88/SND3 form a complex with the translocon in the endoplasmic reticulum membrane.

The protein resides in the endoplasmic reticulum membrane. Its function is as follows. Functions in the SND pathway, a SRP (signal recognition particle) and GET (guided entry of tail-anchored proteins) independent pathway for targeting a broad range of substrate proteins to the endoplasmic reticulum. SND functions in parallel to GET in targeting proteins with downstream hydrophobic motifs. Involved in vacuolar processing and morphology. In Saccharomyces cerevisiae (strain ATCC 204508 / S288c) (Baker's yeast), this protein is SRP-independent targeting protein 2.